The primary structure comprises 285 residues: Tryptophan synthase alpha chain (285 aa).

Catalysis depends on proton acceptor residues glutamate 53 and aspartate 64.

It belongs to the TrpA family. Tetramer of two alpha and two beta chains.

The catalysed reaction is (1S,2R)-1-C-(indol-3-yl)glycerol 3-phosphate + L-serine = D-glyceraldehyde 3-phosphate + L-tryptophan + H2O. Its pathway is amino-acid biosynthesis; L-tryptophan biosynthesis; L-tryptophan from chorismate: step 5/5. Functionally, the alpha subunit is responsible for the aldol cleavage of indoleglycerol phosphate to indole and glyceraldehyde 3-phosphate. In Bordetella bronchiseptica (strain ATCC BAA-588 / NCTC 13252 / RB50) (Alcaligenes bronchisepticus), this protein is Tryptophan synthase alpha chain.